Consider the following 25-residue polypeptide: Cytochrome c oxidase polypeptide VIIc (25 aa).

The tract at residues 1 to 25 (SHYSEGPGQNLPFSVQNKXRLLGMM) is disordered.

Belongs to the cytochrome c oxidase VIIc family. In terms of assembly, component of the cytochrome c oxidase (complex IV, CIV), a multisubunit enzyme composed of 14 subunits. The complex is composed of a catalytic core of 3 subunits MT-CO1, MT-CO2 and MT-CO3, encoded in the mitochondrial DNA, and 11 supernumerary subunits COX4I, COX5A, COX5B, COX6A, COX6B, COX6C, COX7A, COX7B, COX7C, COX8 and NDUFA4, which are encoded in the nuclear genome. The complex exists as a monomer or a dimer and forms supercomplexes (SCs) in the inner mitochondrial membrane with NADH-ubiquinone oxidoreductase (complex I, CI) and ubiquinol-cytochrome c oxidoreductase (cytochrome b-c1 complex, complex III, CIII), resulting in different assemblies (supercomplex SCI(1)III(2)IV(1) and megacomplex MCI(2)III(2)IV(2)). Interacts with RAB5IF.

The protein localises to the mitochondrion inner membrane. It functions in the pathway energy metabolism; oxidative phosphorylation. In terms of biological role, component of the cytochrome c oxidase, the last enzyme in the mitochondrial electron transport chain which drives oxidative phosphorylation. The respiratory chain contains 3 multisubunit complexes succinate dehydrogenase (complex II, CII), ubiquinol-cytochrome c oxidoreductase (cytochrome b-c1 complex, complex III, CIII) and cytochrome c oxidase (complex IV, CIV), that cooperate to transfer electrons derived from NADH and succinate to molecular oxygen, creating an electrochemical gradient over the inner membrane that drives transmembrane transport and the ATP synthase. Cytochrome c oxidase is the component of the respiratory chain that catalyzes the reduction of oxygen to water. Electrons originating from reduced cytochrome c in the intermembrane space (IMS) are transferred via the dinuclear copper A center (CU(A)) of subunit 2 and heme A of subunit 1 to the active site in subunit 1, a binuclear center (BNC) formed by heme A3 and copper B (CU(B)). The BNC reduces molecular oxygen to 2 water molecules using 4 electrons from cytochrome c in the IMS and 4 protons from the mitochondrial matrix. This is Cytochrome c oxidase polypeptide VIIc from Oncorhynchus mykiss (Rainbow trout).